The chain runs to 244 residues: Carboxy-S-adenosyl-L-methionine synthase (244 aa).

Residues Y38, G63–S65, D88–N89, D116–I117, N131, and R198 each bind S-adenosyl-L-methionine.

Belongs to the class I-like SAM-binding methyltransferase superfamily. Cx-SAM synthase family. Homodimer.

The catalysed reaction is prephenate + S-adenosyl-L-methionine = carboxy-S-adenosyl-L-methionine + 3-phenylpyruvate + H2O. Catalyzes the conversion of S-adenosyl-L-methionine (SAM) to carboxy-S-adenosyl-L-methionine (Cx-SAM). This is Carboxy-S-adenosyl-L-methionine synthase from Haemophilus ducreyi (strain 35000HP / ATCC 700724).